A 947-amino-acid chain; its full sequence is ATP-dependent RNA helicase DDX42 (947 aa).

Positions 1 to 18 (MNWNKGGSGNKRGFGFGG) are enriched in gly residues. Disordered stretches follow at residues 1–54 (MNWN…NQLP), 68–114 (EENS…PLEA), and 176–200 (NLEY…LPPI). Residues 34-54 (VSHSAFQSASSKYGSTSNQLP) show a composition bias toward polar residues. Positions 68-81 (EENSYFDDEEEDSS) are enriched in acidic residues. The stretch at 112-152 (LEAFMAEVEDQAAKDMRKLEERDKEKANARGIRDDIEEEDD) forms a coiled coil. Residues 250–278 (SSFAHFGFDEQLLHQIRKSEYTQPTPIQC) carry the Q motif motif. Residues 281 to 456 (IPVALSGRDM…RDILVDPIRV (176 aa)) form the Helicase ATP-binding domain. 294–301 (AKTGSGKT) contributes to the ATP binding site. The short motif at 404-407 (DEAD) is the DEAD box element. Residues 484-629 (WLTRRLVEFT…YVSKELLDLA (146 aa)) enclose the Helicase C-terminal domain. Disordered stretches follow at residues 731-754 (SAGS…EAAP) and 797-947 (GASA…RWDS). Positions 805–929 (GGRERHSDSK…RKEGTREAKT (125 aa)) are enriched in basic and acidic residues. Basic residues predominate over residues 938 to 947 (PKRKKSRWDS).

This sequence belongs to the DEAD box helicase family. DDX42 subfamily. In terms of assembly, transient component of the SF3B subcomplex of the 17S U2 SnRNP complex.

Its subcellular location is the cytoplasm. The protein resides in the nucleus. The enzyme catalyses ATP + H2O = ADP + phosphate + H(+). ATP-dependent RNA helicase that binds to partially double-stranded RNAs (dsRNAs) in order to unwind RNA secondary structures. Unwinding is promoted in the presence of single-strand binding proteins. Also mediates RNA duplex formation thereby displacing the single-strand RNA binding protein. ATP and ADP modulate its activity: ATP binding and hydrolysis by DDX42 triggers RNA strand separation, whereas the ADP-bound form of the protein triggers annealing of complementary RNA strands. Required for assembly of the 17S U2 SnRNP complex of the spliceosome, a large ribonucleoprotein complex that removes introns from transcribed pre-mRNAs: DDX42 associates transiently with the SF3B subcomplex of the 17S U2 SnRNP complex and is released after fulfilling its role in the assembly of 17S U2 SnRNP. This Xenopus laevis (African clawed frog) protein is ATP-dependent RNA helicase DDX42 (ddx42).